The chain runs to 535 residues: Beta-hexosaminidase 3 (535 aa).

Positions 1–24 are cleaved as a signal peptide; it reads MRGSGAKIAGVLPLFMLFIAGTIS. N-linked (GlcNAc...) asparagine glycosylation occurs at Asn92. Cys292 and Cys334 are joined by a disulfide. Glu329 serves as the catalytic Proton donor. 4 N-linked (GlcNAc...) asparagine glycosylation sites follow: Asn331, Asn405, Asn441, and Asn496. Cys506 and Cys532 are joined by a disulfide.

The protein belongs to the glycosyl hydrolase 20 family. In terms of processing, N-glycosylated. In terms of tissue distribution, expressed in roots, leaves, stems, flowers and siliques.

It is found in the cell membrane. It carries out the reaction Hydrolysis of terminal non-reducing N-acetyl-D-hexosamine residues in N-acetyl-beta-D-hexosaminides.. Slightly inhibited by N-acetylcastanospermine. In terms of biological role, has a broad substrate specificity. Can use synthetic substrates such as pyridylaminated chitotriose, p-nitrophenyl-beta-N-acetylglucosaminide, p-nitrophenyl-2-acetamido-2-deoxy-beta-D-glucopyranoside (pNP-GlcNAc), p-nitrophenyl-2-acetamido-2-deoxy-beta-D-galactopyranoside (pNP-GalNAc), 4-methylumbelliferyl-2-acetamido-2-deoxy-beta-D-glucopyranoside (MU-GlcNAc), and 4-methylumbelliferyl-6-sulfo-2-acetamido-2-deoxy-beta-D-glucopyranoside (MU-GlcNAc-6SO(4)) as substrates. Removes terminal GlcNAc residues from alpha1,3- and alpha1,6-mannosyl branches of biantennary N-glycans without any strict branch preference. Required for the presence of paucimannosidic N-glycans in glycoproteins of roots and leaves. The polypeptide is Beta-hexosaminidase 3 (HEXO3) (Arabidopsis thaliana (Mouse-ear cress)).